A 672-amino-acid chain; its full sequence is Beta-galactosidase GanA (672 aa).

Residue R105 participates in substrate binding. Zn(2+) is bound at residue C109. A substrate-binding site is contributed by N143. E144 acts as the Proton donor in catalysis. Residues C149, C151, and C154 each coordinate Zn(2+). The Nucleophile role is filled by E308. Substrate is bound by residues W316 and 356–359; that span reads EKLH.

Belongs to the glycosyl hydrolase 42 family. Homotrimer.

It carries out the reaction Hydrolysis of terminal non-reducing beta-D-galactose residues in beta-D-galactosides.. Its activity is regulated as follows. Inhibited by zinc, cobalt and copper ions. Its function is as follows. Involved in galactan degradation. Hydrolyzes galactooligosaccharides released by the endo-beta-1,4-galactanase GanB from galactan. Degrades galactotetraose, galactotriose and galactobiose, generating galactose as the end product. It is unable to use lactose. In vitro, shows maximal activity with o-nitrophenyl-beta-D-galactopyranoside (ONPG) and p-nitrophenyl-beta-D-galactopyranoside (PNPG) as substrates, trace activity with p-nitrophenyl-alpha-L-arabinopyranoside and o-nitrophenyl-beta-D-fucopyranoside as substrates, but no activity with p-nitrophenyl-alpha-D-galactopyranoside, p-nitrophenyl-beta-D-glucopyranoside, o-nitrophenyl-beta-D-xylopyranoside, p-nitrophenyl-beta-D-mannopyranoside or p-nitrophenyl-alpha-L-arabinofuranoside as substrates. The polypeptide is Beta-galactosidase GanA (Bacillus subtilis (strain 168)).